Consider the following 147-residue polypeptide: Phospholipase A2 inhibitor subunit B (147 aa).

A C-type lectin domain is found at 62–143 (EICEEAGGHI…DEKLLVVCEF (82 aa)). Disulfide bonds link Cys64/Cys141 and Cys119/Cys133. Residue Asn103 is glycosylated (N-linked (GlcNAc...) asparagine).

The protein belongs to the alpha-type phospholipase A2 inhibitor family. Homo- or heterotrimer; homotrimer of PLI-A chains, two PLI-A and one PLI-B chains, one PLI-A and two PLI-B chains, and homotrimer of PLI-B chains (with a ratio of 1:3:3:1). As to expression, expressed by the liver.

It is found in the secreted. Its function is as follows. PLI binds directly phospholipase A2 in the presence or absence of calcium. Inhibitory activity of the PLI-B homotrimer is less specific than that of the PLI-A homotrimer. The polypeptide is Phospholipase A2 inhibitor subunit B (Protobothrops flavoviridis (Habu)).